Consider the following 280-residue polypeptide: Bis(5'-nucleosyl)-tetraphosphatase, symmetrical (280 aa).

Belongs to the Ap4A hydrolase family.

It carries out the reaction P(1),P(4)-bis(5'-adenosyl) tetraphosphate + H2O = 2 ADP + 2 H(+). In terms of biological role, hydrolyzes diadenosine 5',5'''-P1,P4-tetraphosphate to yield ADP. This chain is Bis(5'-nucleosyl)-tetraphosphatase, symmetrical, found in Shigella flexneri serotype 5b (strain 8401).